The following is a 160-amino-acid chain: Ribosome-binding factor A (160 aa).

Over residues 112–122 (KARQSDEKVRE) the composition is skewed to basic and acidic residues. Residues 112–160 (KARQSDEKVREASAGATYAGEADPYRKPDEDETDTEGAVEADETDDTAK) are disordered. The span at 141 to 160 (EDETDTEGAVEADETDDTAK) shows a compositional bias: acidic residues.

The protein belongs to the RbfA family. As to quaternary structure, monomer. Binds 30S ribosomal subunits, but not 50S ribosomal subunits or 70S ribosomes.

It is found in the cytoplasm. In terms of biological role, one of several proteins that assist in the late maturation steps of the functional core of the 30S ribosomal subunit. Associates with free 30S ribosomal subunits (but not with 30S subunits that are part of 70S ribosomes or polysomes). Required for efficient processing of 16S rRNA. May interact with the 5'-terminal helix region of 16S rRNA. The chain is Ribosome-binding factor A from Streptomyces coelicolor (strain ATCC BAA-471 / A3(2) / M145).